Reading from the N-terminus, the 337-residue chain is Formamidase (337 aa).

The CN hydrolase domain occupies 14–257 (VVIGLVQLQL…DEIITAEVRP (244 aa)). The Proton acceptor role is filled by Glu60. Catalysis depends on Lys129, which acts as the Proton donor. Cys162 functions as the Nucleophile in the catalytic mechanism.

It belongs to the carbon-nitrogen hydrolase superfamily. Aliphatic amidase family.

The enzyme catalyses formamide + H2O = formate + NH4(+). Functionally, is an aliphatic amidase with a restricted substrate specificity, as it only hydrolyzes formamide. This chain is Formamidase, found in Bradyrhizobium diazoefficiens (strain JCM 10833 / BCRC 13528 / IAM 13628 / NBRC 14792 / USDA 110).